The following is a 35-amino-acid chain: Photosystem II reaction center protein T (35 aa).

Residues 3–23 form a helical membrane-spanning segment; that stretch reads ALVYTFLLVSTLGIIFFAIFF.

The protein belongs to the PsbT family. PSII is composed of 1 copy each of membrane proteins PsbA, PsbB, PsbC, PsbD, PsbE, PsbF, PsbH, PsbI, PsbJ, PsbK, PsbL, PsbM, PsbT, PsbY, PsbZ, Psb30/Ycf12, at least 3 peripheral proteins of the oxygen-evolving complex and a large number of cofactors. It forms dimeric complexes.

It is found in the plastid. The protein resides in the chloroplast thylakoid membrane. In terms of biological role, found at the monomer-monomer interface of the photosystem II (PS II) dimer, plays a role in assembly and dimerization of PSII. PSII is a light-driven water plastoquinone oxidoreductase, using light energy to abstract electrons from H(2)O, generating a proton gradient subsequently used for ATP formation. The protein is Photosystem II reaction center protein T of Pisum sativum (Garden pea).